We begin with the raw amino-acid sequence, 422 residues long: Glycine amidinotransferase, mitochondrial (422 aa).

Catalysis depends on residues Asp253 and His302. Cys406 (amidino-cysteine intermediate) is an active-site residue.

This sequence belongs to the amidinotransferase family. Homodimer. Strongly expressed in neurons and glia of the brain, the lamina propria, submucosa and serosa of the small intestine, in oocytes and on the fringes of the pancreas. Not expressed in the retina, eye lens, heart or bulbus arteriosus. Expressed in the yolk syncytial layer in gastrula stage embryos, in the yolk syncytial layer and mature somites in early segmentation embryos and in the yolk syncytial layer and the liver of long-pec stage (48 hours post-fertilization) embryos.

It localises to the mitochondrion inner membrane. The catalysed reaction is L-arginine + glycine = guanidinoacetate + L-ornithine. The protein operates within amine and polyamine biosynthesis; creatine biosynthesis; creatine from L-arginine and glycine: step 1/2. In terms of biological role, catalyzes the biosynthesis of guanidinoacetate, the immediate precursor of creatine. Creatine plays a vital role in energy metabolism in muscle tissues. May play a role in embryonic and central nervous system development. The chain is Glycine amidinotransferase, mitochondrial from Danio rerio (Zebrafish).